The following is a 512-amino-acid chain: ATP synthase subunit beta 2 (512 aa).

174 to 181 (GGAGVGKT) is a binding site for ATP. Over residues 479–494 (RRKEEAAREADARRDA) the composition is skewed to basic and acidic residues. The interval 479–512 (RRKEEAAREADARRDAAAGAASGSAGPQGAQHGR) is disordered.

This sequence belongs to the ATPase alpha/beta chains family. F-type ATPases have 2 components, CF(1) - the catalytic core - and CF(0) - the membrane proton channel. CF(1) has five subunits: alpha(3), beta(3), gamma(1), delta(1), epsilon(1). CF(0) has three main subunits: a(1), b(2) and c(9-12). The alpha and beta chains form an alternating ring which encloses part of the gamma chain. CF(1) is attached to CF(0) by a central stalk formed by the gamma and epsilon chains, while a peripheral stalk is formed by the delta and b chains.

The protein localises to the cell inner membrane. The enzyme catalyses ATP + H2O + 4 H(+)(in) = ADP + phosphate + 5 H(+)(out). Functionally, produces ATP from ADP in the presence of a proton gradient across the membrane. The catalytic sites are hosted primarily by the beta subunits. In Burkholderia thailandensis (strain ATCC 700388 / DSM 13276 / CCUG 48851 / CIP 106301 / E264), this protein is ATP synthase subunit beta 2.